The sequence spans 154 residues: Large ribosomal subunit protein uL22c (154 aa).

This sequence belongs to the universal ribosomal protein uL22 family. Part of the 50S ribosomal subunit.

It is found in the plastid. The protein localises to the chloroplast. Its function is as follows. This protein binds specifically to 23S rRNA. The globular domain of the protein is located near the polypeptide exit tunnel on the outside of the subunit, while an extended beta-hairpin is found that lines the wall of the exit tunnel in the center of the 70S ribosome. This is Large ribosomal subunit protein uL22c (rpl22) from Guizotia abyssinica (Niger).